A 615-amino-acid polypeptide reads, in one-letter code: TANK-binding kinase 1-binding protein 1 (615 aa).

The tract at residues Met1 to Arg279 is homodimerization. A coiled-coil region spans residues Tyr48–Ile162. Residue Ser184 is modified to Phosphoserine. Residues Val221–Gln276 adopt a coiled-coil conformation. Residues Asp280–Ser329 form an interaction with TBK1 and IKBKE region. Residues Gln326 to Gly458 are disordered. The segment covering Pro345 to Ser365 has biased composition (pro residues). Residues Ser365, Ser372, Ser379, Ser385, Ser400, and Ser415 each carry the phosphoserine modification. A compositionally biased stretch (pro residues) spans Pro389 to Cys406. A compositionally biased stretch (pro residues) spans Pro416–Gly435. A phosphoserine mark is found at Ser504 and Ser534. Residues Ile583–His609 form a UBZ1-type zinc finger. Zn(2+) is bound by residues Cys586, Cys589, His605, and His609.

In terms of assembly, homodimer. May form a heterodimer with NAP1. Interacts with TKB1 and IKBKE. Weakly interacts with DDX3X. As to quaternary structure, (Microbial infection) Interacts with vaccinia virus protein C6. In terms of tissue distribution, detected in leukocytes, lung, placenta, small intestine, liver, kidney, spleen, muscle, heart, brain and at low levels in thymus.

Adapter protein which constitutively binds TBK1 and IKBKE playing a role in antiviral innate immunity. This is TANK-binding kinase 1-binding protein 1 from Homo sapiens (Human).